Here is a 244-residue protein sequence, read N- to C-terminus: Lymphotoxin-beta (244 aa).

Residues 1–18 (MGALGLEGRGGRLQGRGS) are Cytoplasmic-facing. Residues 19–48 (LLLAVAGATSLVTLLLAVPITVLAVLALVP) traverse the membrane as a helical; Signal-anchor for type II membrane protein segment. Residues 49–244 (QDQGGLVTDT…KTFFGAVMVG (196 aa)) are Extracellular-facing. Residues 88–243 (PAAHLIGAPL…GKTFFGAVMV (156 aa)) enclose the THD domain. N-linked (GlcNAc...) asparagine glycosylation is present at asparagine 222.

Belongs to the tumor necrosis factor family. As to quaternary structure, heterotrimer of either two LTB and one LTA subunits or (less prevalent) two LTA and one LTB subunits.

The protein resides in the membrane. Cytokine that binds to LTBR/TNFRSF3. May play a specific role in immune response regulation. Provides the membrane anchor for the attachment of the heterotrimeric complex to the cell surface. The polypeptide is Lymphotoxin-beta (LTB) (Macaca mulatta (Rhesus macaque)).